Consider the following 433-residue polypeptide: Phosphoribosylamine--glycine ligase (433 aa).

The region spanning 110-317 is the ATP-grasp domain; the sequence is RNFMKKYGIE…FVDIMSAVVK (208 aa). 137–194 is a binding site for ATP; that stretch reads IEKLGDVAVKPSGLTGGKGVKVMGDQLPDLKAAKAYTSELLEKGSVVIEERFIGEEFT. Gln-275, Glu-287, and Asn-289 together coordinate Mg(2+). Mn(2+) is bound by residues Gln-275, Glu-287, and Asn-289.

It belongs to the GARS family. Mg(2+) is required as a cofactor. Requires Mn(2+) as cofactor.

It catalyses the reaction 5-phospho-beta-D-ribosylamine + glycine + ATP = N(1)-(5-phospho-beta-D-ribosyl)glycinamide + ADP + phosphate + H(+). It functions in the pathway purine metabolism; IMP biosynthesis via de novo pathway; N(1)-(5-phospho-D-ribosyl)glycinamide from 5-phospho-alpha-D-ribose 1-diphosphate: step 2/2. The protein is Phosphoribosylamine--glycine ligase of Methanosarcina barkeri (strain Fusaro / DSM 804).